Reading from the N-terminus, the 248-residue chain is Triosephosphate isomerase (248 aa).

14–16 (NWK) provides a ligand contact to substrate. Residue histidine 99 is the Electrophile of the active site. Glutamate 170 functions as the Proton acceptor in the catalytic mechanism. Substrate-binding positions include glycine 176, serine 212, and 233–234 (GG).

It belongs to the triosephosphate isomerase family. Homodimer.

The protein localises to the cytoplasm. It carries out the reaction D-glyceraldehyde 3-phosphate = dihydroxyacetone phosphate. The protein operates within carbohydrate biosynthesis; gluconeogenesis. It functions in the pathway carbohydrate degradation; glycolysis; D-glyceraldehyde 3-phosphate from glycerone phosphate: step 1/1. Involved in the gluconeogenesis. Catalyzes stereospecifically the conversion of dihydroxyacetone phosphate (DHAP) to D-glyceraldehyde-3-phosphate (G3P). The polypeptide is Triosephosphate isomerase (Bordetella bronchiseptica (strain ATCC BAA-588 / NCTC 13252 / RB50) (Alcaligenes bronchisepticus)).